Reading from the N-terminus, the 306-residue chain is Non-homologous end joining protein Ku 2 (306 aa).

The region spanning 21–206 is the Ku domain; that stretch reads ISFGLVNIGV…EVSKQEIDMA (186 aa). A disordered region spans residues 233–306; the sequence is LIDAKTKGTK…GSRDKTRKRA (74 aa). The segment covering 274–290 has biased composition (basic residues); sequence RTSRRKTTASASRRRSS. The span at 291 to 300 shows a compositional bias: basic and acidic residues; that stretch reads SNREKTGSRD.

Belongs to the prokaryotic Ku family. As to quaternary structure, homodimer. Interacts with LigD.

Its function is as follows. With LigD forms a non-homologous end joining (NHEJ) DNA repair enzyme, which repairs dsDNA breaks with reduced fidelity. Binds linear dsDNA with 5'- and 3'- overhangs but not closed circular dsDNA nor ssDNA. Recruits and stimulates the ligase activity of LigD. The polypeptide is Non-homologous end joining protein Ku 2 (Saccharopolyspora erythraea (strain ATCC 11635 / DSM 40517 / JCM 4748 / NBRC 13426 / NCIMB 8594 / NRRL 2338)).